A 175-amino-acid chain; its full sequence is Large ribosomal subunit protein uL10 (175 aa).

It belongs to the universal ribosomal protein uL10 family. In terms of assembly, part of the ribosomal stalk of the 50S ribosomal subunit. The N-terminus interacts with L11 and the large rRNA to form the base of the stalk. The C-terminus forms an elongated spine to which L12 dimers bind in a sequential fashion forming a multimeric L10(L12)X complex.

Its function is as follows. Forms part of the ribosomal stalk, playing a central role in the interaction of the ribosome with GTP-bound translation factors. The chain is Large ribosomal subunit protein uL10 from Prochlorococcus marinus (strain SARG / CCMP1375 / SS120).